A 339-amino-acid polypeptide reads, in one-letter code: Lipoate-protein ligase A (339 aa).

The 189-residue stretch at 29-217 (PKKQSILFLW…AFFQHYGMKV (189 aa)) folds into the BPL/LPL catalytic domain. ATP is bound by residues Arg71, 76 to 79 (GAVF), and Lys135. Lys135 lines the (R)-lipoate pocket.

This sequence belongs to the LplA family. As to quaternary structure, monomer.

The protein localises to the cytoplasm. It carries out the reaction L-lysyl-[lipoyl-carrier protein] + (R)-lipoate + ATP = N(6)-[(R)-lipoyl]-L-lysyl-[lipoyl-carrier protein] + AMP + diphosphate + H(+). It functions in the pathway protein modification; protein lipoylation via exogenous pathway; protein N(6)-(lipoyl)lysine from lipoate: step 1/2. It participates in protein modification; protein lipoylation via exogenous pathway; protein N(6)-(lipoyl)lysine from lipoate: step 2/2. Its function is as follows. Catalyzes both the ATP-dependent activation of exogenously supplied lipoate to lipoyl-AMP and the transfer of the activated lipoyl onto the lipoyl domains of lipoate-dependent enzymes. In Blochmanniella pennsylvanica (strain BPEN), this protein is Lipoate-protein ligase A.